Here is a 234-residue protein sequence, read N- to C-terminus: Leucyl/phenylalanyl-tRNA--protein transferase (234 aa).

Belongs to the L/F-transferase family.

The protein resides in the cytoplasm. The enzyme catalyses N-terminal L-lysyl-[protein] + L-leucyl-tRNA(Leu) = N-terminal L-leucyl-L-lysyl-[protein] + tRNA(Leu) + H(+). It catalyses the reaction N-terminal L-arginyl-[protein] + L-leucyl-tRNA(Leu) = N-terminal L-leucyl-L-arginyl-[protein] + tRNA(Leu) + H(+). It carries out the reaction L-phenylalanyl-tRNA(Phe) + an N-terminal L-alpha-aminoacyl-[protein] = an N-terminal L-phenylalanyl-L-alpha-aminoacyl-[protein] + tRNA(Phe). Functions in the N-end rule pathway of protein degradation where it conjugates Leu, Phe and, less efficiently, Met from aminoacyl-tRNAs to the N-termini of proteins containing an N-terminal arginine or lysine. The chain is Leucyl/phenylalanyl-tRNA--protein transferase from Salmonella gallinarum (strain 287/91 / NCTC 13346).